A 78-amino-acid chain; its full sequence is U23-theraphotoxin-Cg1a 1 (78 aa).

An N-terminal signal peptide occupies residues 1-21; sequence MKTSVLVTVLGLAVISVLCSA. Residues 22-49 constitute a propeptide that is removed on maturation; that stretch reads SQDEEQDMYDELLSAVFEVNDELQSEAR. 3 disulfides stabilise this stretch: cysteine 50–cysteine 64, cysteine 57–cysteine 69, and cysteine 63–cysteine 75.

Belongs to the neurotoxin 10 (Hwtx-1) family. 64 (Jztx-20) subfamily. In terms of tissue distribution, expressed by the venom gland.

The protein resides in the secreted. Probable ion channel inhibitor. This is U23-theraphotoxin-Cg1a 1 from Chilobrachys guangxiensis (Chinese earth tiger tarantula).